The following is a 207-amino-acid chain: Urease accessory protein UreE (207 aa).

The segment at 171 to 207 is disordered; it reads HHGHAHSHSHSHDHDHDHDHDHQHGPGCAHGHGHDHH. Over residues 180–194 the composition is skewed to basic and acidic residues; the sequence is HSHDHDHDHDHDHQH.

It belongs to the UreE family.

The protein localises to the cytoplasm. Involved in urease metallocenter assembly. Binds nickel. Probably functions as a nickel donor during metallocenter assembly. In Burkholderia lata (strain ATCC 17760 / DSM 23089 / LMG 22485 / NCIMB 9086 / R18194 / 383), this protein is Urease accessory protein UreE.